We begin with the raw amino-acid sequence, 347 residues long: GMP reductase (347 aa).

Ala108–Ala131 contacts NADP(+). K(+) is bound by residues Gly181 and Gly183. Cys186 (thioimidate intermediate) is an active-site residue. Position 216-239 (Ile216–Val239) interacts with NADP(+).

It belongs to the IMPDH/GMPR family. GuaC type 1 subfamily. In terms of assembly, homotetramer.

It carries out the reaction IMP + NH4(+) + NADP(+) = GMP + NADPH + 2 H(+). Its function is as follows. Catalyzes the irreversible NADPH-dependent deamination of GMP to IMP. It functions in the conversion of nucleobase, nucleoside and nucleotide derivatives of G to A nucleotides, and in maintaining the intracellular balance of A and G nucleotides. The protein is GMP reductase of Vibrio cholerae serotype O1 (strain ATCC 39541 / Classical Ogawa 395 / O395).